The sequence spans 104 residues: Large ribosomal subunit protein bL21 (104 aa).

Basic residues predominate over residues 81 to 90; the sequence is QGYRRHHGHR. The disordered stretch occupies residues 81–104; it reads QGYRRHHGHRQPYTQVKITGISAG.

It belongs to the bacterial ribosomal protein bL21 family. In terms of assembly, part of the 50S ribosomal subunit. Contacts protein L20.

In terms of biological role, this protein binds to 23S rRNA in the presence of protein L20. The sequence is that of Large ribosomal subunit protein bL21 from Halorhodospira halophila (strain DSM 244 / SL1) (Ectothiorhodospira halophila (strain DSM 244 / SL1)).